The sequence spans 203 residues: Ribosomal RNA small subunit methyltransferase G (203 aa).

Residues Gly-73, Leu-78, 124–125 (VE), and Arg-139 contribute to the S-adenosyl-L-methionine site.

Belongs to the methyltransferase superfamily. RNA methyltransferase RsmG family.

Its subcellular location is the cytoplasm. It catalyses the reaction guanosine(527) in 16S rRNA + S-adenosyl-L-methionine = N(7)-methylguanosine(527) in 16S rRNA + S-adenosyl-L-homocysteine. Functionally, specifically methylates the N7 position of guanine in position 527 of 16S rRNA. The polypeptide is Ribosomal RNA small subunit methyltransferase G (Haemophilus influenzae (strain 86-028NP)).